A 252-amino-acid polypeptide reads, in one-letter code: Chitooligosaccharide deacetylase (252 aa).

Mg(2+) is bound by residues His-61 and His-125.

This sequence belongs to the YdjC deacetylase family. ChbG subfamily. As to quaternary structure, homodimer. Requires Mg(2+) as cofactor.

The protein localises to the cytoplasm. The catalysed reaction is N,N'-diacetylchitobiose + H2O = N-acetyl-beta-D-glucosaminyl-(1-&gt;4)-D-glucosamine + acetate. It carries out the reaction diacetylchitobiose-6'-phosphate + H2O = N'-monoacetylchitobiose-6'-phosphate + acetate. The protein operates within glycan degradation; chitin degradation. Its function is as follows. Involved in the degradation of chitin. ChbG is essential for growth on the acetylated chitooligosaccharides chitobiose and chitotriose but is dispensable for growth on cellobiose and chitosan dimer, the deacetylated form of chitobiose. Deacetylation of chitobiose-6-P and chitotriose-6-P is necessary for both the activation of the chb promoter by the regulatory protein ChbR and the hydrolysis of phosphorylated beta-glucosides by the phospho-beta-glucosidase ChbF. Catalyzes the removal of only one acetyl group from chitobiose-6-P to yield monoacetylchitobiose-6-P, the inducer of ChbR and the substrate of ChbF. This chain is Chitooligosaccharide deacetylase, found in Salmonella schwarzengrund (strain CVM19633).